The chain runs to 147 residues: Cyanate hydratase (147 aa).

Residues arginine 88, glutamate 91, and serine 114 contribute to the active site.

Belongs to the cyanase family.

It catalyses the reaction cyanate + hydrogencarbonate + 3 H(+) = NH4(+) + 2 CO2. Its function is as follows. Catalyzes the reaction of cyanate with bicarbonate to produce ammonia and carbon dioxide. This is Cyanate hydratase from Ralstonia pickettii (strain 12J).